A 549-amino-acid polypeptide reads, in one-letter code: Cation/acetate symporter ActP (549 aa).

13 helical membrane passes run 33–53, 77–97, 103–123, 148–168, 183–203, 206–226, 262–282, 303–323, 355–375, 404–424, 428–448, 464–484, and 493–513; these read WQAIIMFLIFVVFTLGITYWA, LAIAGDYMSAASFLGISALVF, GLIYSLGFLVGWPIILFLIAE, ILSACGSLVVVALYLIAQMVG, IAVVLVGVLMMMYVLFGGMLA, WVQIIKAVLLLFGASFMAFMV, ISALSLGLGLMFGTAGLPHIL, GFMGYFYILTFIIGFGAIMLV, LFLGFISAVAFATILAVVAGL, VSKITVLILGVIAIILGVLFE, IAFMVGLAFAIAASCNFPIIL, GGWLGLITAVVLMILGPTIWV, and IFPYEYPALFSISVAFLGIWF.

It belongs to the sodium:solute symporter (SSF) (TC 2.A.21) family.

Its subcellular location is the cell inner membrane. Its function is as follows. Transports acetate. In Escherichia coli O8 (strain IAI1), this protein is Cation/acetate symporter ActP.